Reading from the N-terminus, the 214-residue chain is Thymidylate kinase (214 aa).

10–17 (GIDGCGKT) serves as a coordination point for ATP.

The protein belongs to the thymidylate kinase family.

The enzyme catalyses dTMP + ATP = dTDP + ADP. Its function is as follows. Phosphorylation of dTMP to form dTDP in both de novo and salvage pathways of dTTP synthesis. The protein is Thymidylate kinase of Prochlorococcus marinus subsp. pastoris (strain CCMP1986 / NIES-2087 / MED4).